The chain runs to 97 residues: Citrate lyase acyl carrier protein (97 aa).

The residue at position 14 (Ser14) is an O-(phosphoribosyl dephospho-coenzyme A)serine.

Belongs to the CitD family. Oligomer with a subunit composition of (alpha,beta,gamma)6.

Its subcellular location is the cytoplasm. Functionally, covalent carrier of the coenzyme of citrate lyase. This chain is Citrate lyase acyl carrier protein, found in Lactobacillus acidophilus (strain ATCC 700396 / NCK56 / N2 / NCFM).